Here is a 142-residue protein sequence, read N- to C-terminus: Hemoglobin subunit alpha-2 (142 aa).

A Globin domain is found at Leu2–Arg142. His59 contacts O2. His88 contributes to the heme b binding site.

This sequence belongs to the globin family. Heterotetramer of two alpha chains and two beta chains. In terms of tissue distribution, red blood cells.

Functionally, involved in oxygen transport from the lung to the various peripheral tissues. The protein is Hemoglobin subunit alpha-2 (hba2) of Xenopus borealis (Kenyan clawed frog).